The sequence spans 354 residues: UPF0324 membrane protein BL1094 (354 aa).

Helical transmembrane passes span 12-33 (IATV…FASW), 43-65 (FGAL…SAYV), 86-108 (LLRL…TQGI), 112-129 (PIAA…YAIA), 138-160 (LAIL…LAGS), 175-197 (VTMA…IALG), 239-256 (LSRV…AIWW), 271-293 (VAFP…VPFV), 300-321 (LVDF…NVNF), and 331-353 (PMLA…AMLF).

It belongs to the UPF0324 family.

It is found in the cell membrane. This Bifidobacterium longum (strain NCC 2705) protein is UPF0324 membrane protein BL1094.